We begin with the raw amino-acid sequence, 240 residues long: Eukaryotic translation initiation factor 3 subunit K (240 aa).

The PCI domain maps to 41–221 (YDKDIVLTIL…TIKTRNIDEK (181 aa)).

This sequence belongs to the eIF-3 subunit K family. As to quaternary structure, component of the eukaryotic translation initiation factor 3 (eIF-3) complex.

The protein resides in the cytoplasm. Component of the eukaryotic translation initiation factor 3 (eIF-3) complex, which is involved in protein synthesis of a specialized repertoire of mRNAs and, together with other initiation factors, stimulates binding of mRNA and methionyl-tRNAi to the 40S ribosome. The eIF-3 complex specifically targets and initiates translation of a subset of mRNAs involved in cell proliferation. This Caenorhabditis briggsae protein is Eukaryotic translation initiation factor 3 subunit K.